Consider the following 1479-residue polypeptide: Type VII secretion system protein EssC (1479 aa).

A required for substrate secretion, protein missing this segment is unstable region spans residues 1-189 (MHKLIIKYNK…ASSLIRLTQE (189 aa)). At 1 to 229 (MHKLIIKYNK…RPPQPIQKNN (229 aa)) the chain is on the cytoplasmic side. Residues 230-252 (TVIWRSIIPPLVMIALTVVIFLV) traverse the membrane as a helical segment. Residues 253–256 (RPIG) are Extracellular-facing. A helical transmembrane segment spans residues 257–279 (IYILMMIGMSTVTIVFGITTYFS). At 280–1479 (EKKKYNKDVE…QAYQKIRWFK (1200 aa)) the chain is on the cytoplasmic side. 2 FtsK domains span residues 652 to 846 (DDIL…QDSN) and 997 to 1183 (QGPM…SEVS). Residues 672–679 (GTTGSGKS) and 1014–1021 (GSPGYGRT) each bind ATP. Residues 1249-1479 (MMPDEIKYED…QAYQKIRWFK (231 aa)) form a required for substrate secretion, truncated protein is stable region.

This sequence belongs to the EssC family. In terms of assembly, homooligomer. Interacts with EsaE.

The protein localises to the cell membrane. Component of the type VII secretion system (Ess). Required for the secretion of substrates including EsxA and EsxB. However, unable to support secretion of the substrate protein EsxC. The sequence is that of Type VII secretion system protein EssC from Staphylococcus aureus (strain NCTC 8325 / PS 47).